Here is a 343-residue protein sequence, read N- to C-terminus: MWPNGSSLGPCFRPTNITLEERRLIASPWFAASFCVVGLASNLLALSVLAGARQGGSHTRSSFLTFLCGLVLTDFLGLLVTGTIVVSQHAALFEWHAVDPGCRLCRFMGVVMIFFGLSPLLLGAAMASERYLGITRPFSRPAVASQRRAWATVGLVWAAALALGLLPLLGVGRYTVQYPGSWCFLTLGAESGDVAFGLLFSMLGGLSVGLSFLLNTVSVATLCHVYHGQEAAQQRPRDSEVEMMAQLLGIMVVASVCWLPLLVFIAQTVLRNPPAMSPAGQLSRTTEKELLIYLRVATWNQILDPWVYILFRRAVLRRLQPRLSTRPRSLSLQPQLTQRSGLQ.

The Extracellular segment spans residues 1-29 (MWPNGSSLGPCFRPTNITLEERRLIASPW). Asn4 and Asn16 each carry an N-linked (GlcNAc...) asparagine glycan. Residues 30 to 52 (FAASFCVVGLASNLLALSVLAGA) form a helical membrane-spanning segment. At 53 to 66 (RQGGSHTRSSFLTF) the chain is on the cytoplasmic side. A helical membrane pass occupies residues 67-87 (LCGLVLTDFLGLLVTGTIVVS). Topologically, residues 88–106 (QHAALFEWHAVDPGCRLCR) are extracellular. Cys105 and Cys183 form a disulfide bridge. A helical transmembrane segment spans residues 107–128 (FMGVVMIFFGLSPLLLGAAMAS). At 129–149 (ERYLGITRPFSRPAVASQRRA) the chain is on the cytoplasmic side. Residues 150-172 (WATVGLVWAAALALGLLPLLGVG) traverse the membrane as a helical segment. Topologically, residues 173–193 (RYTVQYPGSWCFLTLGAESGD) are extracellular. The helical transmembrane segment at 194-219 (VAFGLLFSMLGGLSVGLSFLLNTVSV) threads the bilayer. Residues 220–246 (ATLCHVYHGQEAAQQRPRDSEVEMMAQ) lie on the Cytoplasmic side of the membrane. A helical membrane pass occupies residues 247–270 (LLGIMVVASVCWLPLLVFIAQTVL). Over 271-289 (RNPPAMSPAGQLSRTTEKE) the chain is Extracellular. The chain crosses the membrane as a helical span at residues 290–311 (LLIYLRVATWNQILDPWVYILF). Residues 312 to 343 (RRAVLRRLQPRLSTRPRSLSLQPQLTQRSGLQ) are Cytoplasmic-facing. Residues Ser329 and Ser331 each carry the phosphoserine modification.

It belongs to the G-protein coupled receptor 1 family. In terms of assembly, interacts with RPGRIP1L. Interacts with PSMA3. Interacts with RACK1; the interaction regulates TBXA2R cell surface expression.

The protein resides in the cell membrane. Functionally, receptor for thromboxane A2 (TXA2), a potent stimulator of platelet aggregation. The activity of this receptor is mediated by a G-protein that activates a phosphatidylinositol-calcium second messenger system. In the kidney, the binding of TXA2 to glomerular TP receptors causes intense vasoconstriction. Activates phospholipase C. Its function is as follows. Activates adenylyl cyclase. In terms of biological role, inhibits adenylyl cyclase. The polypeptide is Thromboxane A2 receptor (TBXA2R) (Homo sapiens (Human)).